The sequence spans 201 residues: MNVEQVYKDANALLEGHFLLASGNHSSRYLQSAKVLEYPQKASLLTDALAEMIRENGIEVDTVCAPALGGVIAGYELARSLGVRSIFVEKKESGMELRRGFEVSPGEKIIICEDIITTGGSALKAAEAIEALGAKVVAFASLANRGFCKRVGGSNEAKSECKLPKDVPFFALEDFTFEMYTPEECPMCKEGSTAIKPGSKG.

Residues lysine 90 and 113–121 (EDIITTGGS) contribute to the 5-phospho-alpha-D-ribose 1-diphosphate site. Threonine 117 and arginine 145 together coordinate orotate.

The protein belongs to the purine/pyrimidine phosphoribosyltransferase family. PyrE subfamily. As to quaternary structure, homodimer. Requires Mg(2+) as cofactor.

It catalyses the reaction orotidine 5'-phosphate + diphosphate = orotate + 5-phospho-alpha-D-ribose 1-diphosphate. It participates in pyrimidine metabolism; UMP biosynthesis via de novo pathway; UMP from orotate: step 1/2. Its function is as follows. Catalyzes the transfer of a ribosyl phosphate group from 5-phosphoribose 1-diphosphate to orotate, leading to the formation of orotidine monophosphate (OMP). In Sulfurovum sp. (strain NBC37-1), this protein is Orotate phosphoribosyltransferase.